Reading from the N-terminus, the 248-residue chain is Cobalt transport protein CbiM (248 aa).

The first 29 residues, 1 to 29 (MKRVSVKNYLVCLLIAVCAIFVFPANASA), serve as a signal peptide directing secretion. 6 consecutive transmembrane segments (helical) span residues 40–60 (GWCISWGVMCMPFLVIGFFSI), 72–92 (TLLAMCGAFAFVLSALKMPSV), 104–124 (LGAVLFGPTAMSVIGAIILLF), 136–156 (TLGANVFSMAIVGPLVSFGVF), 167–187 (GLAVFLAVFFGDLMTYVITSV), and 210–230 (IFGFTQVPLAVCEGLLTVVIY).

This sequence belongs to the CbiM family. As to quaternary structure, forms an energy-coupling factor (ECF) transporter complex composed of an ATP-binding protein (A component, CbiO), a transmembrane protein (T component, CbiQ) and 2 possible substrate-capture proteins (S components, CbiM and CbiN) of unknown stoichimetry.

The protein localises to the cell membrane. It participates in cofactor biosynthesis; adenosylcobalamin biosynthesis. Functionally, part of the energy-coupling factor (ECF) transporter complex CbiMNOQ involved in cobalt import. This is Cobalt transport protein CbiM from Ruminiclostridium cellulolyticum (strain ATCC 35319 / DSM 5812 / JCM 6584 / H10) (Clostridium cellulolyticum).